A 373-amino-acid chain; its full sequence is ORC1-type DNA replication protein 2 (373 aa).

Residues Thr-63–Ser-67, Tyr-205, and Arg-217 contribute to the ATP site.

It belongs to the CDC6/cdc18 family.

Involved in regulation of DNA replication. In Methanosarcina mazei (strain ATCC BAA-159 / DSM 3647 / Goe1 / Go1 / JCM 11833 / OCM 88) (Methanosarcina frisia), this protein is ORC1-type DNA replication protein 2 (cdc6-2).